We begin with the raw amino-acid sequence, 953 residues long: Zinc finger protein 618 (953 aa).

Position 1 is an N-acetylmethionine (methionine 1). Residues 1–56 are disordered; the sequence is MSQPDGAAAPQVDGASAPGRKSAVNRERLKRSQKSSKVEGPEPVPAEASLSAEQGT. Glycyl lysine isopeptide (Lys-Gly) (interchain with G-Cter in SUMO2) cross-links involve residues lysine 63 and lysine 81. 2 C2H2-type zinc fingers span residues 146 to 168 and 187 to 209; these read YECG…VRAH and YTCD…RDLH. Lysine 238 participates in a covalent cross-link: Glycyl lysine isopeptide (Lys-Gly) (interchain with G-Cter in SUMO2). The segment at 255–277 adopts a C2H2-type 3 zinc-finger fold; sequence YTCEFCGKQYKYYTPYQEHVALH. 2 disordered regions span residues 283 to 305 and 337 to 390; these read APGW…EVTP and TPPA…SSEP. Polar residues predominate over residues 339-354; the sequence is PATQTQTFRAPNSGSP. A compositionally biased stretch (basic and acidic residues) spans 365-379; that stretch reads FSRRVESKAQNHFEE. A C2H2-type 4 zinc finger spans residues 391–413; that stretch reads YTCGACGIQFQFYSNLLEHMQSH. A compositionally biased stretch (polar residues) spans 419 to 428; that stretch reads NNITSNQSRS. The segment at 419 to 461 is disordered; the sequence is NNITSNQSRSPPAAVEEKWKPQAQRNSANNTTTSGLTPNSVIP. Residue lysine 436 forms a Glycyl lysine isopeptide (Lys-Gly) (interchain with G-Cter in SUMO2) linkage. The span at 441–458 shows a compositional bias: polar residues; it reads AQRNSANNTTTSGLTPNS.

It belongs to the krueppel C2H2-type zinc-finger protein family. As to quaternary structure, interacts with UHRF2.

It is found in the nucleus. Its subcellular location is the chromosome. Functionally, regulates UHRF2 function as a specific 5-hydroxymethylcytosine (5hmC) reader by regulating its chromatin localization. The chain is Zinc finger protein 618 (Znf618) from Mus musculus (Mouse).